Consider the following 335-residue polypeptide: MAPLGDGGAAAAAASNNLVVSFGEMLIDFVPDVAGLSLAESGGFVKAPGGAPANVACAIAKLGGSSAFVGKFGDDEFGHMLVNILKQNNVNAEGCLFDKHARTALAFVTLKHDGEREFMFYRNPSADMLLTEAELDLGLVRRARVFHYGSISLISEPCRSAHMAAMRAAKAAGVLCSYDPNVRLPLWPSPDAAREGILSIWKEADFIKVSDDEVAFLTRGDANDEKNVLSLWFDGLKLLVVTDGDKGCRYFTKDFKGSVPGFKVDTVDTTGAGDAFVGSLLVNVAKDDSIFHNEEKLREALKFSNACGAICTTKKGAIPALPTVATAQDLIAKAN.

It belongs to the carbohydrate kinase PfkB family. Expressed in roots, at higher levels in stems, and hardly detectable in leaves.

It carries out the reaction D-fructose + ATP = D-fructose 6-phosphate + ADP + H(+). The protein operates within glycan biosynthesis; starch biosynthesis. Inhibited at high fructose. In terms of biological role, may play an important role in maintaining the flux of carbon towards starch formation. May also be involved in a sugar-sensing pathway. This Zea mays (Maize) protein is Fructokinase-2 (FRK2).